Here is a 459-residue protein sequence, read N- to C-terminus: Putrescine aminotransferase (459 aa).

Pyridoxal 5'-phosphate contacts are provided by residues 150-151 (GT) and Gln-274. At Lys-300 the chain carries N6-(pyridoxal phosphate)lysine. Position 332 (Thr-332) interacts with pyridoxal 5'-phosphate.

The protein belongs to the class-III pyridoxal-phosphate-dependent aminotransferase family. Putrescine aminotransferase subfamily. It depends on pyridoxal 5'-phosphate as a cofactor.

The enzyme catalyses an alkane-alpha,omega-diamine + 2-oxoglutarate = an omega-aminoaldehyde + L-glutamate. The catalysed reaction is putrescine + 2-oxoglutarate = 1-pyrroline + L-glutamate + H2O. It catalyses the reaction cadaverine + 2-oxoglutarate = 5-aminopentanal + L-glutamate. Its pathway is amine and polyamine degradation; putrescine degradation; 4-aminobutanal from putrescine (transaminase route): step 1/1. Catalyzes the aminotransferase reaction from putrescine to 2-oxoglutarate, leading to glutamate and 4-aminobutanal, which spontaneously cyclizes to form 1-pyrroline. This is the first step in one of two pathways for putrescine degradation, where putrescine is converted into 4-aminobutanoate (gamma-aminobutyrate or GABA) via 4-aminobutanal. Also functions as a cadaverine transaminase in a a L-lysine degradation pathway to succinate that proceeds via cadaverine, glutarate and L-2-hydroxyglutarate. The protein is Putrescine aminotransferase of Escherichia coli O9:H4 (strain HS).